A 187-amino-acid chain; its full sequence is Elongation factor P (187 aa).

The protein belongs to the elongation factor P family.

It localises to the cytoplasm. It participates in protein biosynthesis; polypeptide chain elongation. Its function is as follows. Involved in peptide bond synthesis. Stimulates efficient translation and peptide-bond synthesis on native or reconstituted 70S ribosomes in vitro. Probably functions indirectly by altering the affinity of the ribosome for aminoacyl-tRNA, thus increasing their reactivity as acceptors for peptidyl transferase. This is Elongation factor P from Synechococcus sp. (strain CC9311).